The primary structure comprises 264 residues: Regulatory protein RecX (264 aa).

This sequence belongs to the RecX family.

It localises to the cytoplasm. Modulates RecA activity. The chain is Regulatory protein RecX from Limosilactobacillus reuteri (strain DSM 20016) (Lactobacillus reuteri).